Reading from the N-terminus, the 146-residue chain is Ribonuclease H (146 aa).

In terms of domain architecture, RNase H type-1 spans 1 to 143 (MQKKIIVYTD…CDELARQAIK (143 aa)). Residues Asp-10, Glu-48, Asp-70, and Asp-135 each contribute to the Mg(2+) site.

The protein belongs to the RNase H family. In terms of assembly, monomer. Mg(2+) serves as cofactor.

The protein resides in the cytoplasm. It carries out the reaction Endonucleolytic cleavage to 5'-phosphomonoester.. Endonuclease that specifically degrades the RNA of RNA-DNA hybrids. This is Ribonuclease H from Chlorobium phaeobacteroides (strain DSM 266 / SMG 266 / 2430).